Consider the following 213-residue polypeptide: Octanoyltransferase (213 aa).

Positions 32 to 207 constitute a BPL/LPL catalytic domain; that stretch reads DHTPDEIWLV…KLLALLNNPP (176 aa). Residues 71–78, 138–140, and 151–153 contribute to the substrate site; these read RGGQVTYH, SLG, and GLA. The Acyl-thioester intermediate role is filled by cysteine 169.

This sequence belongs to the LipB family.

Its subcellular location is the cytoplasm. The enzyme catalyses octanoyl-[ACP] + L-lysyl-[protein] = N(6)-octanoyl-L-lysyl-[protein] + holo-[ACP] + H(+). The protein operates within protein modification; protein lipoylation via endogenous pathway; protein N(6)-(lipoyl)lysine from octanoyl-[acyl-carrier-protein]: step 1/2. Functionally, catalyzes the transfer of endogenously produced octanoic acid from octanoyl-acyl-carrier-protein onto the lipoyl domains of lipoate-dependent enzymes. Lipoyl-ACP can also act as a substrate although octanoyl-ACP is likely to be the physiological substrate. This Enterobacter sp. (strain 638) protein is Octanoyltransferase.